Reading from the N-terminus, the 30-residue chain is Hainantoxin F7-28.42 (30 aa).

As to expression, expressed by the venom gland.

It localises to the secreted. This chain is Hainantoxin F7-28.42, found in Cyriopagopus hainanus (Chinese bird spider).